A 1423-amino-acid polypeptide reads, in one-letter code: Serum albumin SDS-1 (1423 aa).

An N-terminal signal peptide occupies residues 1 to 23; that stretch reads MGKAMLKLCITLMVLVFSGTAES. A propeptide spanning residues 24–29 is cleaved from the precursor; it reads KGVMRR. 7 consecutive Albumin domains span residues 29–230, 231–426, 427–608, 609–811, 812–1031, 1032–1226, and 1227–1422; these read REDE…EDFK, HKLT…EFKS, EVEK…SDFK, MDVE…SQAR, QEAL…HTIH, MEIR…AIEK, and VIKD…AIKS. His36 contacts Cu cation. Disulfide bonds link Cys42–Cys88, Cys87–Cys96, Cys109–Cys125, Cys124–Cys135, Cys167–Cys212, Cys211–Cys221, Cys244–Cys290, Cys289–Cys298, Cys311–Cys327, Cys326–Cys337, Cys363–Cys408, Cys407–Cys416, Cys439–Cys485, Cys484–Cys493, Cys506–Cys522, and Cys521–Cys532. N-linked (GlcNAc...) asparagine glycosylation occurs at Asn490. The N-linked (GlcNAc...) asparagine glycan is linked to Asn541. 11 disulfide bridges follow: Cys556-Cys601, Cys622-Cys668, Cys667-Cys676, Cys689-Cys705, Cys704-Cys715, Cys747-Cys792, Cys791-Cys802, Cys825-Cys871, Cys870-Cys879, Cys892-Cys907, and Cys906-Cys947. The N-linked (GlcNAc...) asparagine glycan is linked to Asn652. N-linked (GlcNAc...) asparagine glycosylation is present at Asn754. N-linked (GlcNAc...) asparagine glycans are attached at residues Asn908 and Asn911. The interval 910-936 is disordered; the sequence is SNTSTTTSTTTSTTTSTTTSTTTSTTS. 7 tandem repeats follow at residues 913–916, 917–920, 921–924, 925–928, 929–932, 933–935, and 936–939. Residues 913–939 form a 7 X 4 AA tandem repeats of S-T-T-T region; it reads STTTSTTTSTTTSTTTSTTTSTTSTTT. N-linked (GlcNAc...) asparagine glycosylation is present at Asn954. Disulfide bonds link Cys969/Cys1014, Cys1013/Cys1022, Cys1045/Cys1091, Cys1090/Cys1099, Cys1112/Cys1128, Cys1127/Cys1138, Cys1163/Cys1208, and Cys1207/Cys1216. The N-linked (GlcNAc...) asparagine glycan is linked to Asn1070. A glycan (N-linked (GlcNAc...) asparagine) is linked at Asn1236. Intrachain disulfides connect Cys1239–Cys1285, Cys1284–Cys1291, Cys1304–Cys1320, Cys1319–Cys1330, Cys1359–Cys1404, and Cys1403–Cys1412.

Belongs to the ALB/AFP/VDB family. Plasma.

The protein localises to the secreted. Functionally, serum albumin, the main protein of plasma, has a good binding capacity for water, Ca(2+), Na(+), K(+), fatty acids, hormones, bilirubin and drugs. Its main function is the regulation of the colloidal osmotic pressure of blood. The chain is Serum albumin SDS-1 (SDS-1) from Petromyzon marinus (Sea lamprey).